We begin with the raw amino-acid sequence, 358 residues long: Electron transfer flavoprotein subunit alpha, mitochondrial (358 aa).

Position 298–326 (Leu298–Asp326) interacts with FAD.

Belongs to the ETF alpha-subunit/FixB family. Heterodimer of an alpha and a beta subunit. Requires FAD as cofactor.

It is found in the mitochondrion matrix. Its function is as follows. The electron transfer flavoprotein serves as a specific electron acceptor for several dehydrogenases, including five acyl-CoA dehydrogenases, glutaryl-CoA and sarcosine dehydrogenase. It transfers the electrons to the main mitochondrial respiratory chain via ETF-ubiquinone oxidoreductase (ETF dehydrogenase). The polypeptide is Electron transfer flavoprotein subunit alpha, mitochondrial (ETFA) (Oryza sativa subsp. indica (Rice)).